We begin with the raw amino-acid sequence, 140 residues long: MANSASGMHVSDECKLKFLELKAKRNYRFIVFKIDEKAQQVMIDKLGNPEETYEDFTRSIPEDECRYAVYDYDFTTPENCQKSKIFFIAWSPDTSRVRSKMLYASSKDRFKRELDGIQVELQATDPSEMSLDIIKGRVNL.

At Ser6 the chain carries Phosphoserine. An ADF-H domain is found at Gly7–Asn139.

This sequence belongs to the actin-binding proteins ADF family.

It localises to the cytoplasm. The protein localises to the cytoskeleton. Its function is as follows. Actin-depolymerizing protein. Severs actin filaments (F-actin) and binds to actin monomers. The protein is Actin-depolymerizing factor 10 (ADF10) of Arabidopsis thaliana (Mouse-ear cress).